We begin with the raw amino-acid sequence, 354 residues long: Neutral protease 2 homolog BCIN_12g06300 (354 aa).

A signal peptide spans 1–19 (MRSFSKILAVASLAAIANS). Residues 20-179 (AVLKRDNNVL…PSSIDRRTVL (160 aa)) constitute a propeptide that is removed on maturation. Disulfide bonds link cysteine 183/cysteine 255 and cysteine 262/cysteine 280. Position 305 (histidine 305) interacts with Zn(2+). Glutamate 306 is a catalytic residue. Zn(2+) contacts are provided by histidine 309 and aspartate 320.

This sequence belongs to the peptidase M35 family. Zn(2+) is required as a cofactor.

The protein resides in the secreted. The enzyme catalyses Preferential cleavage of bonds with hydrophobic residues in P1'. Also 3-Asn-|-Gln-4 and 8-Gly-|-Ser-9 bonds in insulin B chain.. Its function is as follows. Secreted metalloproteinase that allows assimilation of proteinaceous substrates. Shows high activities on basic nuclear substrates such as histone and protamine. The protein is Neutral protease 2 homolog BCIN_12g06300 of Botryotinia fuckeliana (strain B05.10) (Noble rot fungus).